A 91-amino-acid chain; its full sequence is Cell division protein FtsB (91 aa).

The Cytoplasmic portion of the chain corresponds to 1–3 (MRW). The helical transmembrane segment at 4–21 (PLIVLAVLVIVLQYPLWL) threads the bilayer. Residues 22–91 (GKGGWLRVWD…EIFVHTPRKP (70 aa)) lie on the Periplasmic side of the membrane. A coiled-coil region spans residues 28-74 (RVWDVDRQLQAQRETNQRLEQRNAGLEAEVRDLKSGNEAVEERARFE).

It belongs to the FtsB family. Part of a complex composed of FtsB, FtsL and FtsQ.

It localises to the cell inner membrane. Essential cell division protein. May link together the upstream cell division proteins, which are predominantly cytoplasmic, with the downstream cell division proteins, which are predominantly periplasmic. In Aromatoleum aromaticum (strain DSM 19018 / LMG 30748 / EbN1) (Azoarcus sp. (strain EbN1)), this protein is Cell division protein FtsB.